A 194-amino-acid polypeptide reads, in one-letter code: Translationally-controlled tumor protein homolog 2 (194 aa).

Residues 1–194 form the TCTP domain; sequence MKLYKDLIGN…IKYGLLQVDV (194 aa).

It belongs to the TCTP family.

It localises to the cytoplasm. In terms of biological role, involved in calcium binding and microtubule stabilization. This chain is Translationally-controlled tumor protein homolog 2, found in Dictyostelium discoideum (Social amoeba).